Consider the following 325-residue polypeptide: Tetraacyldisaccharide 4'-kinase (325 aa).

An ATP-binding site is contributed by 55–62; sequence TAGGNGKT.

This sequence belongs to the LpxK family.

It carries out the reaction a lipid A disaccharide + ATP = a lipid IVA + ADP + H(+). It functions in the pathway glycolipid biosynthesis; lipid IV(A) biosynthesis; lipid IV(A) from (3R)-3-hydroxytetradecanoyl-[acyl-carrier-protein] and UDP-N-acetyl-alpha-D-glucosamine: step 6/6. Transfers the gamma-phosphate of ATP to the 4'-position of a tetraacyldisaccharide 1-phosphate intermediate (termed DS-1-P) to form tetraacyldisaccharide 1,4'-bis-phosphate (lipid IVA). The protein is Tetraacyldisaccharide 4'-kinase of Salmonella paratyphi B (strain ATCC BAA-1250 / SPB7).